A 601-amino-acid polypeptide reads, in one-letter code: ATP-dependent lipid A-core flippase (601 aa).

An ABC transmembrane type-1 domain is found at 28-328 (LLSVCGLIVY…LTRVNAEFQR (301 aa)). Transmembrane regions (helical) follow at residues 32–52 (CGLIVYGLVDAAFISFIGPFI), 81–101 (VLLMAPIVVILMFSLRGFANF), 160–180 (ALISIVRDGVTVIGMLGLMFY), 183–203 (WKLSLCILVIGPIMGLVITIV), 267–287 (AVSQPLIMVIGSFALAFVLYA), and 296–316 (DLTAGTFATILGAMMAMLQPI). Positions 360–597 (LRFDNVSFSY…GGMYAKLYQM (238 aa)) constitute an ABC transporter domain. 394–401 (GRSGSGKS) lines the ATP pocket.

This sequence belongs to the ABC transporter superfamily. Lipid exporter (TC 3.A.1.106) family. Homodimer.

It is found in the cell inner membrane. It catalyses the reaction ATP + H2O + lipid A-core oligosaccharideSide 1 = ADP + phosphate + lipid A-core oligosaccharideSide 2.. Involved in lipopolysaccharide (LPS) biosynthesis. Translocates lipid A-core from the inner to the outer leaflet of the inner membrane. Transmembrane domains (TMD) form a pore in the inner membrane and the ATP-binding domain (NBD) is responsible for energy generation. In Shewanella sp. (strain MR-4), this protein is ATP-dependent lipid A-core flippase.